A 529-amino-acid polypeptide reads, in one-letter code: Bifunctional purine biosynthesis protein PurH (529 aa).

Residues 2–149 form the MGS-like domain; it reads TNLVPVGRAL…KNHRFVNVVT (148 aa).

It belongs to the PurH family.

It carries out the reaction (6R)-10-formyltetrahydrofolate + 5-amino-1-(5-phospho-beta-D-ribosyl)imidazole-4-carboxamide = 5-formamido-1-(5-phospho-D-ribosyl)imidazole-4-carboxamide + (6S)-5,6,7,8-tetrahydrofolate. The catalysed reaction is IMP + H2O = 5-formamido-1-(5-phospho-D-ribosyl)imidazole-4-carboxamide. It functions in the pathway purine metabolism; IMP biosynthesis via de novo pathway; 5-formamido-1-(5-phospho-D-ribosyl)imidazole-4-carboxamide from 5-amino-1-(5-phospho-D-ribosyl)imidazole-4-carboxamide (10-formyl THF route): step 1/1. It participates in purine metabolism; IMP biosynthesis via de novo pathway; IMP from 5-formamido-1-(5-phospho-D-ribosyl)imidazole-4-carboxamide: step 1/1. The sequence is that of Bifunctional purine biosynthesis protein PurH from Cereibacter sphaeroides (strain ATCC 17025 / ATH 2.4.3) (Rhodobacter sphaeroides).